The primary structure comprises 376 residues: Fibromodulin (376 aa).

The N-terminal stretch at 1 to 18 (MQWASILLLAGLCSLSWA) is a signal peptide. At glutamine 19 the chain carries Pyrrolidone carboxylic acid. 9 positions are modified to sulfotyrosine: tyrosine 20, tyrosine 38, tyrosine 45, tyrosine 47, tyrosine 50, tyrosine 53, tyrosine 55, tyrosine 63, and tyrosine 65. The LRRNT domain maps to 67–105 (SPPQPEPRDCPQECDCPPNFPTAMYCDNRNLKYLPFVPS). 8 LRR repeats span residues 106–127 (RMKY…VFDN), 130–151 (GLLW…KKVF), 156–176 (HLER…PLPR), 177–198 (SLRE…ALEG), 201–222 (NLTA…MKGL), 224–245 (SLIL…LPSA), 246–266 (LEQL…YFRG), and 269–289 (KLLY…ASNT). Asparagine 127 carries an N-linked (GlcNAc...) (keratan sulfate) asparagine glycan. Asparagine 166 is a glycosylation site (N-linked (GlcNAc...) (keratan sulfate) asparagine). Residue asparagine 201 is glycosylated (N-linked (GlcNAc...) (keratan sulfate) asparagine). N-linked (GlcNAc...) (keratan sulfate) asparagine glycosylation is present at asparagine 291. 2 LRR repeats span residues 294–315 (SLLE…STNL) and 316–335 (ENLY…SFCT). Cysteine 334 and cysteine 367 are disulfide-bonded. An N-linked (GlcNAc...) asparagine glycan is attached at asparagine 341. Residues 344-365 (KLQVLRLDGNEIKRSAMPADAP) form an LRR 11 repeat.

It belongs to the small leucine-rich proteoglycan (SLRP) family. SLRP class II subfamily. Binds to type I and type II collagen. In terms of processing, binds keratan sulfate chains.

It localises to the secreted. The protein localises to the extracellular space. It is found in the extracellular matrix. Its function is as follows. Affects the rate of fibrils formation. May have a primary role in collagen fibrillogenesis. The chain is Fibromodulin (FMOD) from Bos taurus (Bovine).